Here is a 194-residue protein sequence, read N- to C-terminus: RNA polymerase II subunit A C-terminal domain phosphatase SSU72 like protein 3 (194 aa).

The protein belongs to the SSU72 phosphatase family.

The protein localises to the nucleus. It catalyses the reaction O-phospho-L-seryl-[protein] + H2O = L-seryl-[protein] + phosphate. The catalysed reaction is O-phospho-L-threonyl-[protein] + H2O = L-threonyl-[protein] + phosphate. Functionally, protein phosphatase that catalyzes the dephosphorylation of the C-terminal domain of RNA polymerase II. Plays a role in RNA processing and termination. The polypeptide is RNA polymerase II subunit A C-terminal domain phosphatase SSU72 like protein 3 (Homo sapiens (Human)).